The primary structure comprises 348 residues: EGF-like domain-containing protein 1 (348 aa).

Positions 1 to 19 are cleaved as a signal peptide; it reads MFYLSTFMTIVISLSLVSC. An EGF-like domain is found at 60-92; sequence TGSNCTVTCQNNGKCYDGSKCLCSSDYTGDLCE. 3 cysteine pairs are disulfide-bonded: cysteine 64–cysteine 74, cysteine 68–cysteine 80, and cysteine 82–cysteine 91. The region spanning 99-342 is the ZP domain; it reads RCTLDAVVFE…PTCAAPXVGQ (244 aa).

In terms of tissue distribution, prismatic layer of shell (at protein level). Expressed primarily in the mantle with highest level in the mantle edge and lower level in the mantle pallium.

It localises to the secreted. In Pinctada maxima (Silver-lipped pearl oyster), this protein is EGF-like domain-containing protein 1.